We begin with the raw amino-acid sequence, 141 residues long: Translation initiation factor 2 subunit beta (141 aa).

It belongs to the eIF-2-beta/eIF-5 family. Heterotrimer composed of an alpha, a beta and a gamma chain.

Its function is as follows. eIF-2 functions in the early steps of protein synthesis by forming a ternary complex with GTP and initiator tRNA. This is Translation initiation factor 2 subunit beta from Sulfolobus acidocaldarius (strain ATCC 33909 / DSM 639 / JCM 8929 / NBRC 15157 / NCIMB 11770).